We begin with the raw amino-acid sequence, 1199 residues long: RNA-binding protein 20 (1199 aa).

Disordered regions lie at residues 1-55 (MVLA…PQAS), 163-186 (PSTA…SLPS), and 320-346 (ERPP…PASQ). A compositionally biased stretch (low complexity) spans 25 to 42 (VMPGVQGPSVPQGQQGMQ). Residues 43–52 (PLPPPPPPQP) are compositionally biased toward pro residues. Positions 170–183 (SPPSQTGGPGPSVS) are enriched in low complexity. The U1-type zinc-finger motif lies at 410–444 (HLPHICSICDKKVFDLKDWELHVKGKLHAQKCLLF). The RRM domain maps to 520 to 595 (RVVHICNLPE…EKLLIRMSTR (76 aa)). Residues 626–636 (EADRYGPERPR) are compositionally biased toward basic and acidic residues. Disordered stretches follow at residues 626–685 (EADR…NGED), 720–884 (REKY…YPTN), and 944–1077 (GETL…SQAC). The RS stretch occupies residues 630-649 (YGPERPRSRSPMSRSLSPRS). Phosphoserine is present on residues Ser-637, Ser-639, Ser-642, Ser-644, and Ser-651. Positions 638–649 (RSPMSRSLSPRS) are enriched in low complexity. A compositionally biased stretch (basic and acidic residues) spans 667–685 (YAWRDEDRETVPRRENGED). Ser-728 bears the Phosphoserine mark. 3 stretches are compositionally biased toward basic and acidic residues: residues 739–758 (KGRE…DKYP), 770–831 (RKEE…KESQ), and 859–868 (ENTRTKKGQD). Ser-787 carries the phosphoserine modification. Ser-871, Ser-873, and Ser-955 each carry phosphoserine. Positions 962–971 (VPSTSASCPN) are enriched in polar residues. Phosphoserine is present on residues Ser-991, Ser-1026, Ser-1038, Ser-1049, Ser-1054, Ser-1058, Ser-1070, Ser-1088, and Ser-1093. The span at 1042–1055 (DDCKARGSPEDGSH) shows a compositional bias: basic and acidic residues. Polar residues predominate over residues 1067-1077 (PTESDLQSQAC). A Matrin-type zinc finger spans residues 1133 to 1164 (FYCKLCGLFYTSEEAAKVSHCRSTVHYRNLQK). Residues 1172–1199 (EGLKETEGTDSPSPERGGIGPHLERKKL) are disordered. Phosphoserine occurs at positions 1182 and 1184.

In terms of assembly, associates with components of the U1 and U2 U1 small nuclear ribonucleoprotein complexes. In terms of processing, phosphorylation regulates the subcellular localization. Phosphorylation of Ser-637 and Ser-639 in the RS (arginine/serine-rich) region promotes nuclear localization of the protein. In contrast, phosphorylation of the C-terminal disordered region promotes localization to cytoplasmic ribonucleoprotein granules. In terms of tissue distribution, predominantly expressed in striated muscle, with highest expression in the heart. In differentiating myoblasts, expression correlates with sarcomere assembly: expression peaks when alpha-actinin is localized mainly in mature Z bodies within the nascent myofiber and expression declines as the sarcomeres continue to mature. Also expressed in kidney.

Its subcellular location is the nucleus. The protein localises to the cytoplasm. The protein resides in the cytoplasmic ribonucleoprotein granule. Its function is as follows. RNA-binding protein that acts as a regulator of mRNA splicing of a subset of genes encoding key structural proteins involved in cardiac development, such as TTN (Titin), CACNA1C, CAMK2D or PDLIM5/ENH. Acts as a repressor of mRNA splicing: specifically binds the 5'UCUU-3' motif that is predominantly found within intronic sequences of pre-mRNAs, leading to the exclusion of specific exons in target transcripts. RBM20-mediated exon skipping is hormone-dependent and is essential for TTN isoform transition in both cardiac and skeletal muscles. RBM20-mediated exon skipping of TTN provides substrates for the formation of circular RNA (circRNAs) from the TTN transcripts. Together with RBM24, promotes the expression of short isoforms of PDLIM5/ENH in cardiomyocytes. This chain is RNA-binding protein 20, found in Mus musculus (Mouse).